The sequence spans 95 residues: Putative pterin-4-alpha-carbinolamine dehydratase (95 aa).

The protein belongs to the pterin-4-alpha-carbinolamine dehydratase family.

The catalysed reaction is (4aS,6R)-4a-hydroxy-L-erythro-5,6,7,8-tetrahydrobiopterin = (6R)-L-erythro-6,7-dihydrobiopterin + H2O. The chain is Putative pterin-4-alpha-carbinolamine dehydratase from Thermosynechococcus vestitus (strain NIES-2133 / IAM M-273 / BP-1).